The chain runs to 254 residues: Phosphoribosylaminoimidazole-succinocarboxamide synthase (254 aa).

This sequence belongs to the SAICAR synthetase family.

The catalysed reaction is 5-amino-1-(5-phospho-D-ribosyl)imidazole-4-carboxylate + L-aspartate + ATP = (2S)-2-[5-amino-1-(5-phospho-beta-D-ribosyl)imidazole-4-carboxamido]succinate + ADP + phosphate + 2 H(+). The protein operates within purine metabolism; IMP biosynthesis via de novo pathway; 5-amino-1-(5-phospho-D-ribosyl)imidazole-4-carboxamide from 5-amino-1-(5-phospho-D-ribosyl)imidazole-4-carboxylate: step 1/2. This chain is Phosphoribosylaminoimidazole-succinocarboxamide synthase, found in Bartonella tribocorum (strain CIP 105476 / IBS 506).